Here is a 339-residue protein sequence, read N- to C-terminus: Probable protein phosphatase 2C 28 (339 aa).

The region spanning 87-334 (DHGYHLVKGQ…DDISCVVVSF (248 aa)) is the PPM-type phosphatase domain. Mn(2+) contacts are provided by D124, G125, D286, and D325.

The protein belongs to the PP2C family. Mg(2+) serves as cofactor. Requires Mn(2+) as cofactor.

The catalysed reaction is O-phospho-L-seryl-[protein] + H2O = L-seryl-[protein] + phosphate. The enzyme catalyses O-phospho-L-threonyl-[protein] + H2O = L-threonyl-[protein] + phosphate. This Arabidopsis thaliana (Mouse-ear cress) protein is Probable protein phosphatase 2C 28.